We begin with the raw amino-acid sequence, 962 residues long: Protein lin-36 (962 aa).

2 disordered regions span residues 1-53 (MSEE…ETEG) and 74-99 (TSSG…PREE). Positions 23-40 (DSHVTVHSVEQDSQHSGE) are enriched in basic and acidic residues. Polar residues predominate over residues 74–95 (TSSGEVLDESQVTPTKQASSSQ). A THAP-type zinc finger spans residues 161-249 (LTHKPCTVCN…IEAFGVPVAI (89 aa)). 2 stretches are compositionally biased toward basic and acidic residues: residues 452 to 472 (KAEE…KHAE) and 534 to 570 (SHEE…DEQF). Disordered regions lie at residues 452 to 575 (KAEE…KMVQ), 612 to 676 (IAAT…PEER), 744 to 788 (QEKG…SASS), and 932 to 962 (DPKW…DSQQ). Residues 626-637 (SSEQTPEPTTSQ) show a composition bias toward low complexity. Over residues 647–658 (KTKESAVQKVEK) the composition is skewed to basic and acidic residues. Over residues 939-951 (QQQQQQQQQQQEQ) the composition is skewed to low complexity. The span at 952–962 (FPGQGSSDSQQ) shows a compositional bias: polar residues.

As to expression, expressed in vulval precursor P(3-8).p cells and their descendants, neurons of the head, tail and ventral cord, hypodermal and intestinal cells and germline cells.

The protein localises to the nucleus. Required to negatively regulate vulval development. Antagonizes Ras-mediated vulval induction. Acts cell autonomously. The polypeptide is Protein lin-36 (lin-36) (Caenorhabditis elegans).